A 117-amino-acid chain; its full sequence is Large ribosomal subunit protein uL18 (117 aa).

Belongs to the universal ribosomal protein uL18 family. As to quaternary structure, part of the 50S ribosomal subunit; part of the 5S rRNA/L5/L18/L25 subcomplex. Contacts the 5S and 23S rRNAs.

Functionally, this is one of the proteins that bind and probably mediate the attachment of the 5S RNA into the large ribosomal subunit, where it forms part of the central protuberance. The protein is Large ribosomal subunit protein uL18 of Haemophilus ducreyi (strain 35000HP / ATCC 700724).